Consider the following 130-residue polypeptide: Cytochrome b-c1 complex subunit 7 (130 aa).

Belongs to the UQCRB/QCR7 family. In terms of assembly, component of the ubiquinol-cytochrome c oxidoreductase (cytochrome b-c1 complex, complex III, CIII), a multisubunit enzyme composed of 3 respiratory subunits cytochrome b, cytochrome c1 and Rieske protein, 2 core protein subunits, and additional low-molecular weight protein subunits. The complex exists as an obligatory dimer and forms supercomplexes (SCs) in the inner mitochondrial membrane with cytochrome c oxidase (complex IV, CIV).

The protein resides in the mitochondrion inner membrane. Component of the ubiquinol-cytochrome c oxidoreductase, a multisubunit transmembrane complex that is part of the mitochondrial electron transport chain which drives oxidative phosphorylation. The respiratory chain contains 3 multisubunit complexes succinate dehydrogenase (complex II, CII), ubiquinol-cytochrome c oxidoreductase (cytochrome b-c1 complex, complex III, CIII) and cytochrome c oxidase (complex IV, CIV), that cooperate to transfer electrons derived from NADH and succinate to molecular oxygen, creating an electrochemical gradient over the inner membrane that drives transmembrane transport and the ATP synthase. The cytochrome b-c1 complex catalyzes electron transfer from ubiquinol to cytochrome c, linking this redox reaction to translocation of protons across the mitochondrial inner membrane, with protons being carried across the membrane as hydrogens on the quinol. In the process called Q cycle, 2 protons are consumed from the matrix, 4 protons are released into the intermembrane space and 2 electrons are passed to cytochrome c. In Schistosoma mansoni (Blood fluke), this protein is Cytochrome b-c1 complex subunit 7.